The following is a 718-amino-acid chain: Receptor-like protein 36 (718 aa).

The N-terminal stretch at 1-26 is a signal peptide; that stretch reads MIRSLSYCFLTIYFFLSILPLPNTIA. At 27–695 the chain is on the extracellular side; it reads CPTRLLCRSD…SESEDQLLNW (669 aa). LRR repeat units lie at residues 70–94, 95–118, 120–141, 143–165, 166–188, 189–213, 214–238, 239–261, 262–286, 288–310, 312–334, 335–359, 360–383, 384–406, 407–431, 433–454, 455–480, and 481–505; these read DAILGELVLSRCKLQGEIPSSIGNL, SHLTYLDLSNNQLVGEVPASIGNL, QLESMRLWDNDLKGNIPTSFAN, TKLSELYLFGNQFTGGDTVLANL, TSLSIIDLSLNYFKSSISADLSG, LHNLERFSVYNNSFSGPFPLSLLMI, PSLVHIDLSQNHFEGPIDFRNTFSL, SRLRVLYVGFNNLDGLIPESISK, LVNLEYLDVSHNNFGGQVPRSISKV, NLTSVDLSYNKLEGQVPDFVWRS, KLDYVDLSYNSFNCFAKSVEVID, GASLTMLNLGSNSVDGPFPKWICKV, KDLYALDLSNNHFNGSIPQCLKYS, TYFHTLNLRNNSLSGVLPNLFIK, DSQLRSLDVSSNNLVGKLPKSLINC, RIEFLNVKGNKIMDTFPFWLGS, LPYLKVLMLGSNAFYGPVYNPSAYLG, and FPSIRIIDISNNNFVGSLPQDYFAN. An N-linked (GlcNAc...) asparagine glycan is attached at Asn93. 2 N-linked (GlcNAc...) asparagine glycosylation sites follow: Asn141 and Asn164. An N-linked (GlcNAc...) asparagine glycan is attached at Asn199. The N-linked (GlcNAc...) asparagine glycan is linked to Asn288. Residues Asn373 and Asn393 are each glycosylated (N-linked (GlcNAc...) asparagine). N-linked (GlcNAc...) asparagine glycosylation is present at Asn528. LRR repeat units follow at residues 550 to 574, 575 to 598, 599 to 622, and 624 to 647; these read FEGFNAIDFSGNRFSGHIPGSIGLL, SELRLLNLSGNAFTGNIPPSLANI, TNLESLDLSRNNLSGEIPISLGKL, and FLSNTNFSYNHLEGLIPQSTQFAT. Residues Asn581, Asn597, Asn610, Asn629, and Asn649 are each glycosylated (N-linked (GlcNAc...) asparagine). The helical transmembrane segment at 696-716 threads the bilayer; that stretch reads IAAAIAFGPGMFCGLVIGHIF. Over 717-718 the chain is Cytoplasmic; that stretch reads TS.

Belongs to the RLP family.

It localises to the cell membrane. This chain is Receptor-like protein 36, found in Arabidopsis thaliana (Mouse-ear cress).